A 425-amino-acid polypeptide reads, in one-letter code: UDP-sugar transporter protein SLC35A5 (425 aa).

The Cytoplasmic portion of the chain corresponds to 1-7 (MESNCGH). The chain crosses the membrane as a helical span at residues 8–28 (PMLSVSSAMYTFLLGAIFITL). Residues 29–52 (SSSRILLVKYSANEENKYDYLPTT) lie on the Lumenal side of the membrane. Residues 53 to 73 (VNVCSELVKLVFCALVSFWVL) traverse the membrane as a helical segment. Over 74-92 (KKEDHQNRKLRCGSWKEFF) the chain is Cytoplasmic. The helical transmembrane segment at 93 to 115 (NFMKWSIPAFLYFLDNLIVFYVL) threads the bilayer. The Lumenal portion of the chain corresponds to 116 to 119 (SYLQ). A helical membrane pass occupies residues 120–142 (PAMAVIFSNFSIITTALLFRIVL). The Cytoplasmic segment spans residues 143-147 (KRHLN). The chain crosses the membrane as a helical span at residues 148–168 (GIQWASLLILFLSIVALTSGT). The Lumenal segment spans residues 169 to 228 (ETSQHSLAGHGFHHDALFSPSNSCLLFRSECPRKDNCTAKEWTFSEAQWNTTARVFSHIR). Residues Asn-204 and Asn-218 are each glycosylated (N-linked (GlcNAc...) asparagine). A helical transmembrane segment spans residues 229–249 (LGLGHVLIIVQCFISSMANIY). The Cytoplasmic portion of the chain corresponds to 250 to 263 (NEKILKEGNQLTES). A helical transmembrane segment spans residues 264–284 (IFVQNSKLYFFGVLFNGLTLG). At 285–303 (LQSGNRDQIKNCGIFYGHN) the chain is on the lumenal side. Residues 304–324 (AFSVALIFVTAFQGLSVAFIL) traverse the membrane as a helical segment. At 325–330 (KFLDNM) the chain is on the cytoplasmic side. A helical transmembrane segment spans residues 331–351 (FHVLMAQVTTVVITTVSVLVF). The Lumenal portion of the chain corresponds to 352–354 (DFR). Residues 355–375 (PSLEFFLEAPSVLLSILIYNA) traverse the membrane as a helical segment. The Cytoplasmic portion of the chain corresponds to 376-425 (SNPQGVENVPRKERIRDLSGTLWERSSGDGEELERLTKPKSDIESDEDTF). A phosphoserine mark is found at Ser-394, Ser-416, and Ser-420. The interval 398–425 (WERSSGDGEELERLTKPKSDIESDEDTF) is disordered. Basic and acidic residues predominate over residues 408 to 418 (LERLTKPKSDI).

Belongs to the nucleotide-sugar transporter family. SLC35A subfamily. Probably forms homooligomers and heterooligomers with SLC35A1, SLC35A2, SLC35A3 and SLC35A4.

It localises to the golgi apparatus membrane. The catalysed reaction is UMP(out) + UDP-alpha-D-glucuronate(in) = UMP(in) + UDP-alpha-D-glucuronate(out). The enzyme catalyses UMP(out) + UDP-N-acetyl-alpha-D-glucosamine(in) = UMP(in) + UDP-N-acetyl-alpha-D-glucosamine(out). It catalyses the reaction UDP-N-acetyl-alpha-D-galactosamine(in) + UMP(out) = UDP-N-acetyl-alpha-D-galactosamine(out) + UMP(in). Probable UDP-sugar:UMP transmembrane antiporter involved in UDP-alpha-D-glucuronate/UDP-GlcA, UDP-GlcNAc/UDP-N-acetyl-alpha-D-glucosamine and UDP-N-acetyl-alpha-D-galactosamine/UDP-GalNAc transport from the cytosol to the lumen of the Golgi. The protein is UDP-sugar transporter protein SLC35A5 of Bos taurus (Bovine).